A 342-amino-acid polypeptide reads, in one-letter code: Methionine import ATP-binding protein MetN 3 (342 aa).

The region spanning 2–241 (ISLKGISKTF…PKEQMTKEFV (240 aa)) is the ABC transporter domain. 38–45 (GYSGAGKS) is an ATP binding site.

This sequence belongs to the ABC transporter superfamily. Methionine importer (TC 3.A.1.24) family. As to quaternary structure, the complex is composed of two ATP-binding proteins (MetN), two transmembrane proteins (MetI) and a solute-binding protein (MetQ).

The protein resides in the cell membrane. The catalysed reaction is L-methionine(out) + ATP + H2O = L-methionine(in) + ADP + phosphate + H(+). It carries out the reaction D-methionine(out) + ATP + H2O = D-methionine(in) + ADP + phosphate + H(+). Functionally, part of the ABC transporter complex MetNIQ involved in methionine import. Responsible for energy coupling to the transport system. This chain is Methionine import ATP-binding protein MetN 3, found in Shouchella clausii (strain KSM-K16) (Alkalihalobacillus clausii).